The primary structure comprises 431 residues: Divalent metal cation transporter MntH (431 aa).

11 consecutive transmembrane segments (helical) span residues 33 to 53 (LLKF…PGNF), 61 to 81 (SSFN…AIFL), 110 to 130 (WIFW…EFIG), 141 to 161 (IPMI…VYME), 170 to 190 (TIIA…LFLA), 211 to 231 (AVLI…IYLH), 258 to 278 (ILIA…VSAA), 307 to 327 (GAFG…GTMA), 347 to 367 (IITM…MRVL), 368 to 388 (VLSQ…MLLI), and 406 to 426 (IVGF…LYLT).

This sequence belongs to the NRAMP family.

It localises to the cell membrane. In terms of biological role, h(+)-stimulated, divalent metal cation uptake system. This Clostridium acetobutylicum (strain ATCC 824 / DSM 792 / JCM 1419 / IAM 19013 / LMG 5710 / NBRC 13948 / NRRL B-527 / VKM B-1787 / 2291 / W) protein is Divalent metal cation transporter MntH.